A 354-amino-acid polypeptide reads, in one-letter code: Uroporphyrinogen decarboxylase (354 aa).

Substrate is bound by residues Arg-27 to Arg-31, Asp-77, Tyr-154, Ser-209, and His-327.

It belongs to the uroporphyrinogen decarboxylase family. In terms of assembly, homodimer.

The protein resides in the cytoplasm. The enzyme catalyses uroporphyrinogen III + 4 H(+) = coproporphyrinogen III + 4 CO2. Its pathway is porphyrin-containing compound metabolism; protoporphyrin-IX biosynthesis; coproporphyrinogen-III from 5-aminolevulinate: step 4/4. In terms of biological role, catalyzes the decarboxylation of four acetate groups of uroporphyrinogen-III to yield coproporphyrinogen-III. The sequence is that of Uroporphyrinogen decarboxylase from Shewanella piezotolerans (strain WP3 / JCM 13877).